Here is a 903-residue protein sequence, read N- to C-terminus: Protein translocase subunit SecA (903 aa).

Residues glutamine 87, glycine 105–threonine 109, and aspartate 513 contribute to the ATP site. Residues methionine 840 to arginine 853 show a composition bias toward basic and acidic residues. Residues methionine 840–asparagine 903 form a disordered region. Cysteine 887, cysteine 889, cysteine 898, and histidine 899 together coordinate Zn(2+).

The protein belongs to the SecA family. As to quaternary structure, monomer and homodimer. Part of the essential Sec protein translocation apparatus which comprises SecA, SecYEG and auxiliary proteins SecDF-YajC and YidC. Zn(2+) serves as cofactor.

It localises to the cell inner membrane. It is found in the cytoplasm. The catalysed reaction is ATP + H2O + cellular proteinSide 1 = ADP + phosphate + cellular proteinSide 2.. Part of the Sec protein translocase complex. Interacts with the SecYEG preprotein conducting channel. Has a central role in coupling the hydrolysis of ATP to the transfer of proteins into and across the cell membrane, serving both as a receptor for the preprotein-SecB complex and as an ATP-driven molecular motor driving the stepwise translocation of polypeptide chains across the membrane. The chain is Protein translocase subunit SecA from Vibrio cholerae serotype O1 (strain M66-2).